The primary structure comprises 252 residues: Ribosomal RNA small subunit methyltransferase A (252 aa).

S-adenosyl-L-methionine is bound by residues Asn10, Leu12, Gly36, Glu57, Asp81, and Asn98.

It belongs to the class I-like SAM-binding methyltransferase superfamily. rRNA adenine N(6)-methyltransferase family. RsmA subfamily.

Its subcellular location is the cytoplasm. The catalysed reaction is adenosine(1518)/adenosine(1519) in 16S rRNA + 4 S-adenosyl-L-methionine = N(6)-dimethyladenosine(1518)/N(6)-dimethyladenosine(1519) in 16S rRNA + 4 S-adenosyl-L-homocysteine + 4 H(+). Its function is as follows. Specifically dimethylates two adjacent adenosines (A1518 and A1519) in the loop of a conserved hairpin near the 3'-end of 16S rRNA in the 30S particle. May play a critical role in biogenesis of 30S subunits. This Mycoplasmopsis pulmonis (strain UAB CTIP) (Mycoplasma pulmonis) protein is Ribosomal RNA small subunit methyltransferase A.